The sequence spans 365 residues: tRNA 2-selenouridine synthase (365 aa).

One can recognise a Rhodanese domain in the interval 12 to 136 (FLDDVPMMDM…LRTFLLDTTQ (125 aa)). Cys-95 (S-selanylcysteine intermediate) is an active-site residue.

Belongs to the SelU family. Monomer.

The catalysed reaction is 5-methylaminomethyl-2-thiouridine(34) in tRNA + selenophosphate + (2E)-geranyl diphosphate + H2O + H(+) = 5-methylaminomethyl-2-selenouridine(34) in tRNA + (2E)-thiogeraniol + phosphate + diphosphate. The enzyme catalyses 5-methylaminomethyl-2-thiouridine(34) in tRNA + (2E)-geranyl diphosphate = 5-methylaminomethyl-S-(2E)-geranyl-thiouridine(34) in tRNA + diphosphate. It catalyses the reaction 5-methylaminomethyl-S-(2E)-geranyl-thiouridine(34) in tRNA + selenophosphate + H(+) = 5-methylaminomethyl-2-(Se-phospho)selenouridine(34) in tRNA + (2E)-thiogeraniol. It carries out the reaction 5-methylaminomethyl-2-(Se-phospho)selenouridine(34) in tRNA + H2O = 5-methylaminomethyl-2-selenouridine(34) in tRNA + phosphate. Its function is as follows. Involved in the post-transcriptional modification of the uridine at the wobble position (U34) of tRNA(Lys), tRNA(Glu) and tRNA(Gln). Catalyzes the conversion of 2-thiouridine (S2U-RNA) to 2-selenouridine (Se2U-RNA). Acts in a two-step process involving geranylation of 2-thiouridine (S2U) to S-geranyl-2-thiouridine (geS2U) and subsequent selenation of the latter derivative to 2-selenouridine (Se2U) in the tRNA chain. The polypeptide is tRNA 2-selenouridine synthase (Pseudomonas putida (strain W619)).